The primary structure comprises 132 residues: Small ribosomal subunit protein uS8 (132 aa).

It belongs to the universal ribosomal protein uS8 family. Part of the 30S ribosomal subunit. Contacts proteins S5 and S12.

One of the primary rRNA binding proteins, it binds directly to 16S rRNA central domain where it helps coordinate assembly of the platform of the 30S subunit. This Rhodospirillum centenum (strain ATCC 51521 / SW) protein is Small ribosomal subunit protein uS8.